Consider the following 118-residue polypeptide: Acidic phospholipase A2 CM-I (118 aa).

7 disulfides stabilise this stretch: cysteine 11–cysteine 70, cysteine 26–cysteine 117, cysteine 28–cysteine 44, cysteine 43–cysteine 98, cysteine 50–cysteine 91, cysteine 59–cysteine 84, and cysteine 77–cysteine 89. Ca(2+) is bound by residues tyrosine 27, glycine 29, and glycine 31. Residue histidine 47 is part of the active site. Aspartate 48 contributes to the Ca(2+) binding site. The active site involves aspartate 92.

This sequence belongs to the phospholipase A2 family. Group I subfamily. D49 sub-subfamily. It depends on Ca(2+) as a cofactor. Expressed by the venom gland.

The protein resides in the secreted. It carries out the reaction a 1,2-diacyl-sn-glycero-3-phosphocholine + H2O = a 1-acyl-sn-glycero-3-phosphocholine + a fatty acid + H(+). Functionally, snake venom phospholipase A2 (PLA2) that causes myonecrosis when injected intramuscularly, shows indirect hemolytic activity, abolishes twitches evoked by indirect stimulation earlier than those by direct stimulation (in the mouse phrenic nerve-diaphragm preparation) but does not produce complete neuromuscular block (up to 30 ug/ml) (in the chick biventer cervicis nerve-muscle preparation). PLA2 catalyzes the calcium-dependent hydrolysis of the 2-acyl groups in 3-sn-phosphoglycerides. This chain is Acidic phospholipase A2 CM-I, found in Naja mossambica (Mozambique spitting cobra).